A 286-amino-acid polypeptide reads, in one-letter code: Bifunctional protein FolD (286 aa).

NADP(+)-binding positions include 165-167 (GRS) and S190.

The protein belongs to the tetrahydrofolate dehydrogenase/cyclohydrolase family. In terms of assembly, homodimer.

It catalyses the reaction (6R)-5,10-methylene-5,6,7,8-tetrahydrofolate + NADP(+) = (6R)-5,10-methenyltetrahydrofolate + NADPH. The enzyme catalyses (6R)-5,10-methenyltetrahydrofolate + H2O = (6R)-10-formyltetrahydrofolate + H(+). It participates in one-carbon metabolism; tetrahydrofolate interconversion. Its function is as follows. Catalyzes the oxidation of 5,10-methylenetetrahydrofolate to 5,10-methenyltetrahydrofolate and then the hydrolysis of 5,10-methenyltetrahydrofolate to 10-formyltetrahydrofolate. The sequence is that of Bifunctional protein FolD from Staphylococcus aureus (strain JH9).